The following is a 295-amino-acid chain: Protease HtpX (295 aa).

The next 2 membrane-spanning stretches (helical) occupy residues Ile-4–Leu-24 and Ala-42–Ser-62. His-147 is a Zn(2+) binding site. The active site involves Glu-148. Zn(2+) is bound at residue His-151. 2 helical membrane passes run Gly-155–Ala-175 and Phe-197–Met-217. Glu-224 lines the Zn(2+) pocket.

It belongs to the peptidase M48B family. The cofactor is Zn(2+).

It is found in the cell inner membrane. The polypeptide is Protease HtpX (Thioalkalivibrio sulfidiphilus (strain HL-EbGR7)).